A 431-amino-acid polypeptide reads, in one-letter code: uncharacterized protein (431 aa).

The next 12 helical transmembrane spans lie at 33-53, 63-83, 111-131, 143-163, 175-195, 197-217, 241-261, 273-293, 318-338, 358-378, 381-401, and 407-427; these read VARV…VIYL, FSVF…ANGL, VSGM…PLWS, VALL…LGML, LMVA…VIGW, LVGF…MLMT, AHSI…PVLL, GVVI…LTAM, LIGG…PWIM, AAAV…AAAL, AYSL…LLPL, and TVVA…VALA.

The protein to M.tuberculosis Rv1510 and M.bovis Mb3654.

The protein localises to the cell membrane. This is an uncharacterized protein from Mycobacterium tuberculosis (strain ATCC 25618 / H37Rv).